A 416-amino-acid polypeptide reads, in one-letter code: Methylthioribose-1-phosphate isomerase (416 aa).

Catalysis depends on aspartate 280, which acts as the Proton donor.

It belongs to the eIF-2B alpha/beta/delta subunits family. MtnA subfamily.

It is found in the cytoplasm. The protein localises to the nucleus. The enzyme catalyses 5-(methylsulfanyl)-alpha-D-ribose 1-phosphate = 5-(methylsulfanyl)-D-ribulose 1-phosphate. The protein operates within amino-acid biosynthesis; L-methionine biosynthesis via salvage pathway; L-methionine from S-methyl-5-thio-alpha-D-ribose 1-phosphate: step 1/6. Functionally, catalyzes the interconversion of methylthioribose-1-phosphate (MTR-1-P) into methylthioribulose-1-phosphate (MTRu-1-P). This is Methylthioribose-1-phosphate isomerase from Candida albicans (strain SC5314 / ATCC MYA-2876) (Yeast).